The following is a 143-amino-acid chain: Anti-sigma F factor (143 aa).

This sequence belongs to the anti-sigma-factor family.

The enzyme catalyses L-seryl-[protein] + ATP = O-phospho-L-seryl-[protein] + ADP + H(+). The catalysed reaction is L-threonyl-[protein] + ATP = O-phospho-L-threonyl-[protein] + ADP + H(+). Binds to sigma F and blocks its ability to form an RNA polymerase holoenzyme (E-sigma F). Phosphorylates SpoIIAA on a serine residue. This phosphorylation may enable SpoIIAA to act as an anti-anti-sigma factor that counteracts SpoIIAB and thus releases sigma F from inhibition. This is Anti-sigma F factor from Clostridium botulinum (strain Eklund 17B / Type B).